Reading from the N-terminus, the 724-residue chain is Degenerin mec-10 (724 aa).

The Cytoplasmic portion of the chain corresponds to 1–125 (MNRGPPNPRM…GQAPNSLYRA (125 aa)). A helical membrane pass occupies residues 126-146 (VWVFLLLICAIQFINQAVAVI). The Extracellular portion of the chain corresponds to 147–684 (QKYQKMDKIT…FGGHLGLWSG (538 aa)). N-linked (GlcNAc...) asparagine glycosylation is found at asparagine 294, asparagine 370, asparagine 463, asparagine 605, and asparagine 624. A helical membrane pass occupies residues 685–705 (VSVMTCCEFVCLVLELLYMAV). Topologically, residues 706–724 (THHITQERIRRRENAANEF) are cytoplasmic.

This sequence belongs to the amiloride-sensitive sodium channel (TC 1.A.6) family. As to quaternary structure, the channel is probably composed of at least the mec-2, mec-4, mec-6 and mec-10 subunits.

Its subcellular location is the cell membrane. Functionally, amiloride-sensitive sodium channel subunit required for mechanosensory transduction (touch sensitivity). Negatively regulates the turning step of male mating behavior. The polypeptide is Degenerin mec-10 (Caenorhabditis briggsae).